The sequence spans 103 residues: Large ribosomal subunit protein uL23 (103 aa).

The protein belongs to the universal ribosomal protein uL23 family. In terms of assembly, part of the 50S ribosomal subunit. Contacts protein L29, and trigger factor when it is bound to the ribosome.

In terms of biological role, one of the early assembly proteins it binds 23S rRNA. One of the proteins that surrounds the polypeptide exit tunnel on the outside of the ribosome. Forms the main docking site for trigger factor binding to the ribosome. In Chlorobium phaeovibrioides (strain DSM 265 / 1930) (Prosthecochloris vibrioformis (strain DSM 265)), this protein is Large ribosomal subunit protein uL23.